The sequence spans 98 residues: Putative protein adenylyltransferase MJ1217 (98 aa).

Residues 31-45 (GSYAREEQKETSDID) carry the GSX(10)DXD motif motif. Residues aspartate 43, aspartate 45, and aspartate 75 each coordinate Mg(2+).

Belongs to the MntA antitoxin family. In terms of assembly, probably forms a complex with cognate toxin MJ1216. Mg(2+) is required as a cofactor.

It carries out the reaction L-tyrosyl-[protein] + ATP = O-(5'-adenylyl)-L-tyrosyl-[protein] + diphosphate. The catalysed reaction is O-(5'-adenylyl)-L-tyrosyl-[protein] + ATP = O-[5'-(adenylyl-(5'-&gt;3')-adenylyl)]-L-tyrosyl-[protein] + diphosphate. Functionally, probable antitoxin component of a putative type VII toxin-antitoxin (TA) system. Neutralizes cognate toxic MJ1216 by di-AMPylation. In Methanocaldococcus jannaschii (strain ATCC 43067 / DSM 2661 / JAL-1 / JCM 10045 / NBRC 100440) (Methanococcus jannaschii), this protein is Putative protein adenylyltransferase MJ1217.